A 474-amino-acid polypeptide reads, in one-letter code: Neuronal acetylcholine receptor subunit eat-2 (474 aa).

Residues 1-21 (MTLKIAFFTLILLVSIERVYS) form the signal peptide. Residues 22 to 237 (SDEEYRLLKD…MHLKRRTMYY (216 aa)) are Extracellular-facing. Asn95 is a glycosylation site (N-linked (GlcNAc...) asparagine). Cysteines 149 and 163 form a disulfide. A run of 3 helical transmembrane segments spans residues 238-258 (GLNW…GFTM), 266-286 (ITLQ…VSEV), and 303-323 (LSIV…NIFF). At 324–440 (RHPKTHRMGD…WRFMAMVIDR (117 aa)) the chain is on the cytoplasmic side. The disordered stretch occupies residues 359 to 378 (PRREEEKNDEEAGGDGTKLL). Residues 441–461 (LSLFLFTGLIFGTTALIFAFC) traverse the membrane as a helical segment.

This sequence belongs to the ligand-gated ion channel (TC 1.A.9) family. Acetylcholine receptor (TC 1.A.9.1) subfamily. As to quaternary structure, neuronal AChR seems to be composed of two different type of subunits: alpha and beta. In terms of tissue distribution, expressed in pharyngeal muscle.

The protein resides in the postsynaptic cell membrane. It is found in the cell membrane. After binding acetylcholine, the AChR responds by an extensive change in conformation that affects all subunits and leads to opening of an ion-conducting channel across the plasma membrane. Nicotinic acetylcholine receptor in the MC pharyngeal motor neuron involved in pharyngeal pumping. Has a role in the determination of life span possibly via calorific restriction which affects growth rate, although this is independent of metabolic activity. Plays a role in the defense against the accumulation of ingested live pathogenic bacteria in the intestine. In Caenorhabditis elegans, this protein is Neuronal acetylcholine receptor subunit eat-2.